A 210-amino-acid chain; its full sequence is Natriuretic peptide BM026 (210 aa).

The first 26 residues, M1 to G26, serve as a signal peptide directing secretion. Positions C83–C99 are natriuretic peptide domain 1. C83 and C99 are disulfide-bonded. Basic and acidic residues predominate over residues E122–V134. Residues E122–A210 are disordered. Gly residues predominate over residues A140–D150. Residues E156–H176 are compositionally biased toward basic and acidic residues. Residues C166–C182 form a natriuretic peptide domain 2 region. An intrachain disulfide couples C166 to C182. Over residues Q201–A210 the composition is skewed to polar residues.

This sequence belongs to the natriuretic peptide family. In terms of tissue distribution, expressed by the venom gland.

The protein localises to the secreted. Its function is as follows. Natriuretic peptide that dose-dependently induces the rapid relaxation of rat aortic strips phenylephrine-precontracted. Acts by stimulating cGMP production in a dose-dependent manner (by probably activating NPR1 and/or NPR2). May also show potent hypotensive effects. The protein is Natriuretic peptide BM026 of Bungarus multicinctus (Many-banded krait).